A 62-amino-acid chain; its full sequence is Alpha-conotoxin-like Ca1.1 (62 aa).

An N-terminal signal peptide occupies residues 1-21 (MGMRMMFTVFLLVVLATTVVS). Positions 22–46 (FTSDRASDGRNAAANAFDLIALIAR) are excised as a propeptide. Q47 is subject to Pyrrolidone carboxylic acid. Cystine bridges form between C49/C55 and C50/C61.

Belongs to the conotoxin A superfamily. In terms of tissue distribution, expressed by the venom duct.

Its subcellular location is the secreted. Functionally, alpha-conotoxins act on postsynaptic membranes, they bind to the nicotinic acetylcholine receptors (nAChR) and thus inhibit them. The sequence is that of Alpha-conotoxin-like Ca1.1 from Conus caracteristicus (Characteristic cone).